A 259-amino-acid chain; its full sequence is Acetylglutamate kinase (259 aa).

Substrate contacts are provided by residues 45-46, arginine 67, and asparagine 159; that span reads GG.

It belongs to the acetylglutamate kinase family. ArgB subfamily.

It localises to the cytoplasm. It carries out the reaction N-acetyl-L-glutamate + ATP = N-acetyl-L-glutamyl 5-phosphate + ADP. The protein operates within amino-acid biosynthesis; L-arginine biosynthesis; N(2)-acetyl-L-ornithine from L-glutamate: step 2/4. In terms of biological role, catalyzes the ATP-dependent phosphorylation of N-acetyl-L-glutamate. In Aeromonas hydrophila subsp. hydrophila (strain ATCC 7966 / DSM 30187 / BCRC 13018 / CCUG 14551 / JCM 1027 / KCTC 2358 / NCIMB 9240 / NCTC 8049), this protein is Acetylglutamate kinase.